The chain runs to 325 residues: MASSSGSKAEFIVGGKYKLVRKIGSGSFGDIYLAINITNGEEVAVKLESQKARHPQLLYESKLYKILQGGVGIPHIRWYGQEKDYNVLVMDLLGPSLEDLFNFCSRRFTMKTVLMLADQMISRIEYVHTKNFIHRDIKPDNFLMGIGRHCNKLFLIDFGLAKKYRDNRTRQHIPYREDKNLTGTARYASINAHLGIEQSRRDDMESLGYVLMYFNRTSLPWQGLKAATKKQKYEKISEKKMSTPVEVLCKGFPAEFAMYLNYCRGLRFEEAPDYMYLRQLFRILFRTLNHQYDYTFDWTMLKQKAAQQAASSSGQGQQAQTPTGF.

A2 bears the N-acetylalanine mark. S4 is modified (phosphoserine). The residue at position 8 (K8) is an N6-acetyllysine. Positions 17–285 (YKLVRKIGSG…YLRQLFRILF (269 aa)) constitute a Protein kinase domain. Residues 23–31 (IGSGSFGDI) and K46 contribute to the ATP site. The Proton acceptor role is filled by D136.

It belongs to the protein kinase superfamily. CK1 Ser/Thr protein kinase family. Casein kinase I subfamily. In terms of assembly, interacts with the Axin complex. Interacts with TUT1, leading to TUT1 phosphorylation. Interacts with FAM83A, FAM83B, FAM83C, FAM83D, FAM83E, FAM83F, FAM83G and FAM83H (via DUF1669). Interaction with FAM83H recruits CSNK1A1 to keratin filaments. Post-translationally, phosphorylated by MTOR in response to mitogenic stimulation, leading to its activation.

The protein localises to the cytoplasm. It localises to the cytoskeleton. The protein resides in the microtubule organizing center. Its subcellular location is the centrosome. It is found in the chromosome. The protein localises to the centromere. It localises to the kinetochore. The protein resides in the nucleus speckle. Its subcellular location is the cilium basal body. It is found in the spindle. It carries out the reaction L-seryl-[protein] + ATP = O-phospho-L-seryl-[protein] + ADP + H(+). The enzyme catalyses L-threonyl-[protein] + ATP = O-phospho-L-threonyl-[protein] + ADP + H(+). In terms of biological role, casein kinases are operationally defined by their preferential utilization of acidic proteins such as caseins as substrates. Can phosphorylate a large number of proteins. Participates in Wnt signaling. Phosphorylates CTNNB1 at 'Ser-45'. May phosphorylate PER1 and PER2. May play a role in segregating chromosomes during mitosis. May play a role in keratin cytoskeleton disassembly and thereby, it may regulate epithelial cell migration. Acts as a positive regulator of mTORC1 and mTORC2 signaling in response to nutrients by mediating phosphorylation of DEPTOR inhibitor. Acts as an inhibitor of NLRP3 inflammasome assembly by mediating phosphorylation of NLRP3. This chain is Casein kinase I isoform alpha (CSNK1A1), found in Oryctolagus cuniculus (Rabbit).